A 223-amino-acid polypeptide reads, in one-letter code: DNA mismatch repair protein MutH (223 aa).

It belongs to the MutH family.

Its subcellular location is the cytoplasm. In terms of biological role, sequence-specific endonuclease that cleaves unmethylated GATC sequences. It is involved in DNA mismatch repair. This is DNA mismatch repair protein MutH from Haemophilus influenzae (strain 86-028NP).